The primary structure comprises 530 residues: Ubiquitin carboxyl-terminal hydrolase 17-like protein 18 (530 aa).

Residues 80–375 (AGLQNMGNTC…QAYVLFYIQK (296 aa)) form the USP domain. Residue cysteine 89 is the Nucleophile of the active site. Histidine 334 functions as the Proton acceptor in the catalytic mechanism. Composition is skewed to basic and acidic residues over residues 382–392 (SESVSRGREPR) and 398–413 (DTDRRAKQGELKRDHP). 2 disordered regions span residues 382–414 (SESVSRGREPRALGAEDTDRRAKQGELKRDHPC) and 509–530 (RGRARRSKGKNKHSKRALLVCQ). Over residues 510–524 (GRARRSKGKNKHSKR) the composition is skewed to basic residues.

This sequence belongs to the peptidase C19 family. USP17 subfamily.

It is found in the nucleus. The protein localises to the endoplasmic reticulum. The catalysed reaction is Thiol-dependent hydrolysis of ester, thioester, amide, peptide and isopeptide bonds formed by the C-terminal Gly of ubiquitin (a 76-residue protein attached to proteins as an intracellular targeting signal).. Deubiquitinating enzyme that removes conjugated ubiquitin from specific proteins to regulate different cellular processes that may include cell proliferation, progression through the cell cycle, apoptosis, cell migration, and the cellular response to viral infection. The polypeptide is Ubiquitin carboxyl-terminal hydrolase 17-like protein 18 (USP17L18) (Homo sapiens (Human)).